The sequence spans 282 residues: Shikimate kinase (282 aa).

An ATP-binding site is contributed by 86–96 (PIKSGLSSSSA).

It belongs to the GHMP kinase family. Archaeal shikimate kinase subfamily.

It is found in the cytoplasm. The catalysed reaction is shikimate + ATP = 3-phosphoshikimate + ADP + H(+). The protein operates within metabolic intermediate biosynthesis; chorismate biosynthesis; chorismate from D-erythrose 4-phosphate and phosphoenolpyruvate: step 5/7. This Methanocaldococcus jannaschii (strain ATCC 43067 / DSM 2661 / JAL-1 / JCM 10045 / NBRC 100440) (Methanococcus jannaschii) protein is Shikimate kinase (aroK).